Here is a 147-residue protein sequence, read N- to C-terminus: Auxin-responsive protein SAUR41 (147 aa).

Belongs to the ARG7 family. As to expression, specifically expressed in the quiescent center and cortex or endodermis initials of root stem niches. Expressed in vascular tissues from hypocotyls, petioles and cotyledons.

The protein localises to the cytoplasm. Its function is as follows. Plays a role in the regulation of cell expansion, root meristem patterning and auxin transport. The sequence is that of Auxin-responsive protein SAUR41 from Arabidopsis thaliana (Mouse-ear cress).